The primary structure comprises 195 residues: ATP-dependent Clp protease proteolytic subunit (195 aa).

Serine 98 serves as the catalytic Nucleophile. Histidine 123 is a catalytic residue.

Belongs to the peptidase S14 family. As to quaternary structure, fourteen ClpP subunits assemble into 2 heptameric rings which stack back to back to give a disk-like structure with a central cavity, resembling the structure of eukaryotic proteasomes.

It localises to the cytoplasm. It carries out the reaction Hydrolysis of proteins to small peptides in the presence of ATP and magnesium. alpha-casein is the usual test substrate. In the absence of ATP, only oligopeptides shorter than five residues are hydrolyzed (such as succinyl-Leu-Tyr-|-NHMec, and Leu-Tyr-Leu-|-Tyr-Trp, in which cleavage of the -Tyr-|-Leu- and -Tyr-|-Trp bonds also occurs).. Cleaves peptides in various proteins in a process that requires ATP hydrolysis. Has a chymotrypsin-like activity. Plays a major role in the degradation of misfolded proteins. The chain is ATP-dependent Clp protease proteolytic subunit from Staphylococcus haemolyticus (strain JCSC1435).